The chain runs to 820 residues: Trimethylamine-N-oxide reductase (820 aa).

The segment at residues 1–33 (MAITRRSFLKGVATTSAASVIGPSLLASASANA) is a signal peptide (tat-type signal). Position 179 (Ser179) interacts with Mo-bis(molybdopterin guanine dinucleotide).

The protein belongs to the prokaryotic molybdopterin-containing oxidoreductase family. Mo-bis(molybdopterin guanine dinucleotide) is required as a cofactor. Post-translationally, predicted to be exported by the Tat system. The position of the signal peptide cleavage has not been experimentally proven.

Its subcellular location is the periplasm. The enzyme catalyses trimethylamine + 2 Fe(III)-[cytochrome c] + H2O = trimethylamine N-oxide + 2 Fe(II)-[cytochrome c] + 3 H(+). Its function is as follows. Reduces trimethylamine-N-oxide (TMAO) into trimethylamine; an anaerobic reaction coupled to energy-yielding reactions. The protein is Trimethylamine-N-oxide reductase (torA) of Vibrio vulnificus (strain YJ016).